Reading from the N-terminus, the 450-residue chain is tRNA (guanine-N(7)-)-methyltransferase non-catalytic subunit TRM82 (450 aa).

The span at 69–82 shows a compositional bias: basic and acidic residues; it reads AAKKLKTNEGEAIE. Residues 69–103 form a disordered region; the sequence is AAKKLKTNEGEAIERPGNQRRVPLPGKDPKVPVPG. WD repeat units lie at residues 108–147, 200–241, and 245–285; these read PVYQ…KDNC, GHVS…VIDK, and GHKE…LMSS.

Belongs to the WD repeat TRM82 family. In terms of assembly, forms a heterodimer with the catalytic subunit TRM8.

The protein localises to the nucleus. It participates in tRNA modification; N(7)-methylguanine-tRNA biosynthesis. Functionally, required for the formation of N(7)-methylguanine at position 46 (m7G46) in tRNA. In the complex, it is required to stabilize and induce conformational changes of the catalytic subunit. This is tRNA (guanine-N(7)-)-methyltransferase non-catalytic subunit TRM82 from Eremothecium gossypii (strain ATCC 10895 / CBS 109.51 / FGSC 9923 / NRRL Y-1056) (Yeast).